The following is a 283-amino-acid chain: Pantothenate synthetase (283 aa).

Met30 to His37 is an ATP binding site. His37 (proton donor) is an active-site residue. Gln61 is a (R)-pantoate binding site. Gln61 lines the beta-alanine pocket. Gly147–Asp150 serves as a coordination point for ATP. Position 153 (Gln153) interacts with (R)-pantoate. ATP contacts are provided by residues Val176 and Val184–Arg187.

This sequence belongs to the pantothenate synthetase family. As to quaternary structure, homodimer.

It is found in the cytoplasm. The enzyme catalyses (R)-pantoate + beta-alanine + ATP = (R)-pantothenate + AMP + diphosphate + H(+). It functions in the pathway cofactor biosynthesis; (R)-pantothenate biosynthesis; (R)-pantothenate from (R)-pantoate and beta-alanine: step 1/1. Functionally, catalyzes the condensation of pantoate with beta-alanine in an ATP-dependent reaction via a pantoyl-adenylate intermediate. In Chlorobium limicola (strain DSM 245 / NBRC 103803 / 6330), this protein is Pantothenate synthetase.